Reading from the N-terminus, the 152-residue chain is Ribosome maturation factor RimP (152 aa).

This sequence belongs to the RimP family.

It localises to the cytoplasm. In terms of biological role, required for maturation of 30S ribosomal subunits. This Stutzerimonas stutzeri (strain A1501) (Pseudomonas stutzeri) protein is Ribosome maturation factor RimP.